A 424-amino-acid chain; its full sequence is Serine--tRNA ligase (424 aa).

Position 230-232 (230-232 (TAE)) interacts with L-serine. 261–263 (RSE) serves as a coordination point for ATP. Glu-284 contributes to the L-serine binding site. Position 348–351 (348–351 (EISS)) interacts with ATP. Position 384 (Ser-384) interacts with L-serine.

This sequence belongs to the class-II aminoacyl-tRNA synthetase family. Type-1 seryl-tRNA synthetase subfamily. Homodimer. The tRNA molecule binds across the dimer.

Its subcellular location is the cytoplasm. The enzyme catalyses tRNA(Ser) + L-serine + ATP = L-seryl-tRNA(Ser) + AMP + diphosphate + H(+). It catalyses the reaction tRNA(Sec) + L-serine + ATP = L-seryl-tRNA(Sec) + AMP + diphosphate + H(+). The protein operates within aminoacyl-tRNA biosynthesis; selenocysteinyl-tRNA(Sec) biosynthesis; L-seryl-tRNA(Sec) from L-serine and tRNA(Sec): step 1/1. Its function is as follows. Catalyzes the attachment of serine to tRNA(Ser). Is also able to aminoacylate tRNA(Sec) with serine, to form the misacylated tRNA L-seryl-tRNA(Sec), which will be further converted into selenocysteinyl-tRNA(Sec). This is Serine--tRNA ligase from Streptococcus pneumoniae (strain JJA).